A 168-amino-acid chain; its full sequence is Photosystem I assembly protein Ycf3 (168 aa).

3 TPR repeats span residues alanine 35–proline 68, serine 72–leucine 105, and glycine 120–asparagine 153.

Belongs to the Ycf3 family.

It localises to the plastid. The protein resides in the chloroplast thylakoid membrane. Its function is as follows. Essential for the assembly of the photosystem I (PSI) complex. May act as a chaperone-like factor to guide the assembly of the PSI subunits. The sequence is that of Photosystem I assembly protein Ycf3 from Liriodendron tulipifera (Tuliptree).